A 409-amino-acid polypeptide reads, in one-letter code: NADH-quinone oxidoreductase subunit D (409 aa).

The protein belongs to the complex I 49 kDa subunit family. In terms of assembly, NDH-1 is composed of 14 different subunits. Subunits NuoB, C, D, E, F, and G constitute the peripheral sector of the complex.

The protein resides in the cell inner membrane. It catalyses the reaction a quinone + NADH + 5 H(+)(in) = a quinol + NAD(+) + 4 H(+)(out). In terms of biological role, NDH-1 shuttles electrons from NADH, via FMN and iron-sulfur (Fe-S) centers, to quinones in the respiratory chain. The immediate electron acceptor for the enzyme in this species is believed to be ubiquinone. Couples the redox reaction to proton translocation (for every two electrons transferred, four hydrogen ions are translocated across the cytoplasmic membrane), and thus conserves the redox energy in a proton gradient. This chain is NADH-quinone oxidoreductase subunit D, found in Helicobacter pylori (strain HPAG1).